Reading from the N-terminus, the 410-residue chain is Ribonucleoside-diphosphate reductase small chain (410 aa).

Polar residues predominate over residues 1–20; the sequence is MSVQTSPSKQVTSGIQNLNM. Disordered stretches follow at residues 1-43 and 55-78; these read MSVQ…DEDL and NANK…ANEP. Composition is skewed to basic and acidic residues over residues 23–43 and 55–65; these read PAKK…DEDL and NANKKAAEAKK. Fe cation-binding residues include Asp146, Glu177, and His180. Tyr184 is a catalytic residue. The Fe cation site is built by Glu240, Glu274, and His277.

It belongs to the ribonucleoside diphosphate reductase small chain family. Heterodimer of a large and a small subunit. The cofactor is Fe cation.

The catalysed reaction is a 2'-deoxyribonucleoside 5'-diphosphate + [thioredoxin]-disulfide + H2O = a ribonucleoside 5'-diphosphate + [thioredoxin]-dithiol. Provides the precursors necessary for DNA synthesis. Catalyzes the biosynthesis of deoxyribonucleotides from the corresponding ribonucleotides. This Neurospora crassa (strain ATCC 24698 / 74-OR23-1A / CBS 708.71 / DSM 1257 / FGSC 987) protein is Ribonucleoside-diphosphate reductase small chain (rnr-2).